A 212-amino-acid chain; its full sequence is 2',3'-cyclic-nucleotide 3'-phosphodiesterase (212 aa).

Catalysis depends on H51, which acts as the Proton donor/acceptor. T53 contacts substrate. The Proton donor/acceptor role is filled by H146. Substrate-binding residues include S148 and Y151.

This sequence belongs to the 2H phosphoesterase superfamily. CPD1 family.

It is found in the golgi apparatus. The enzyme catalyses a nucleoside 2',3'-cyclic phosphate + H2O = a nucleoside 2'-phosphate + H(+). In terms of biological role, involved in the metabolism of ADP-ribose 1',2'-cyclic phosphate which is produced as a consequence of tRNA splicing. The protein is 2',3'-cyclic-nucleotide 3'-phosphodiesterase (cpd-7) of Neurospora crassa (strain ATCC 24698 / 74-OR23-1A / CBS 708.71 / DSM 1257 / FGSC 987).